The chain runs to 240 residues: MIEIILAIDIIEGKAVRLTQGDYKQKKIYNQDPLEVAKKFEDYGIRRLHLVDLDGAKANFIVNYKILERIASHTSLIIDFSGGLKSDSDLKIAFNSGAKMVTGGSIAVKNPKIFKNWINKFGANCILLGADCRNNKIAVNGWTEETNEEILPFIKKWRKYGITKVICTDISKDGMLKGTSTELYKTIKKEDTSIYLIASGGVSCIYDIDMLQEAGLSGVIIGKAIYESKIQLKELKKYAC.

Catalysis depends on D9, which acts as the Proton acceptor. The active-site Proton donor is the D131.

Belongs to the HisA/HisF family.

It localises to the cytoplasm. It carries out the reaction 1-(5-phospho-beta-D-ribosyl)-5-[(5-phospho-beta-D-ribosylamino)methylideneamino]imidazole-4-carboxamide = 5-[(5-phospho-1-deoxy-D-ribulos-1-ylimino)methylamino]-1-(5-phospho-beta-D-ribosyl)imidazole-4-carboxamide. Its pathway is amino-acid biosynthesis; L-histidine biosynthesis; L-histidine from 5-phospho-alpha-D-ribose 1-diphosphate: step 4/9. The chain is 1-(5-phosphoribosyl)-5-[(5-phosphoribosylamino)methylideneamino] imidazole-4-carboxamide isomerase from Azobacteroides pseudotrichonymphae genomovar. CFP2.